Here is a 262-residue protein sequence, read N- to C-terminus: Acyl-[acyl-carrier-protein]--UDP-N-acetylglucosamine O-acyltransferase (262 aa).

Belongs to the transferase hexapeptide repeat family. LpxA subfamily. As to quaternary structure, homotrimer.

The protein resides in the cytoplasm. It carries out the reaction a (3R)-hydroxyacyl-[ACP] + UDP-N-acetyl-alpha-D-glucosamine = a UDP-3-O-[(3R)-3-hydroxyacyl]-N-acetyl-alpha-D-glucosamine + holo-[ACP]. It participates in glycolipid biosynthesis; lipid IV(A) biosynthesis; lipid IV(A) from (3R)-3-hydroxytetradecanoyl-[acyl-carrier-protein] and UDP-N-acetyl-alpha-D-glucosamine: step 1/6. Its function is as follows. Involved in the biosynthesis of lipid A, a phosphorylated glycolipid that anchors the lipopolysaccharide to the outer membrane of the cell. The chain is Acyl-[acyl-carrier-protein]--UDP-N-acetylglucosamine O-acyltransferase from Yersinia enterocolitica.